Here is a 602-residue protein sequence, read N- to C-terminus: Zinc finger MYND domain-containing protein 11 (602 aa).

Residues 6–82 (KRRQADTKAI…CKGSKAGIEQ (77 aa)) form the SAMD1-like winged helix (WH) domain. Residues 100–148 (DWYCFECHLPGEVLICDLCFRVYHSKCLSDEFRLRDSSSHWQCPVCRSI) form a PHD-type zinc finger. A Bromo domain is found at 149 to 255 (KKKHSNKQEM…KDTCHELDEL (107 aa)). Residues C258, C261, C277, and H281 each contribute to the Zn(2+) site. The PWWP domain maps to 280-331 (NHELVWAKMKGFGFWPAKVMQKEDNQVDVRFFGHHHQRAWIPSENIQDITVN). Positions 291–310 (FGFWPAKVMQKEDNQVDVRF) are aromatic cage required for H3.3K36me3-specific binding. K366 is covalently cross-linked (Glycyl lysine isopeptide (Lys-Gly) (interchain with G-Cter in SUMO2)). Residues 366–461 (KNEDRGEEEA…HRSTQTTSDG (96 aa)) are disordered. Residues 394–400 (RAKKGRR) carry the Nuclear localization signal motif. Glycyl lysine isopeptide (Lys-Gly) (interchain with G-Cter in SUMO2) cross-links involve residues K407 and K408. S421 carries the post-translational modification Phosphoserine. Residues 435–461 (SVSTQTKKLSASSPRMLHRSTQTTSDG) show a composition bias toward polar residues. Residues C563, C566, C574, C575, C581, C585, H594, and C598 each contribute to the Zn(2+) site. The segment at 563–598 (CYNCEEEAMYHCCWNTSYCSIKCQQEHWHAEHKRTC) adopts an MYND-type zinc-finger fold.

In terms of assembly, homooligomer; forms homooligomers via its C-terminus. Interacts with histone H3.3 trimethylated at 'Lys-36' (H3.3K36me3). Interacts (via MYND-type zinc finger) with NCOR1. Interacts (via MYND-type zinc finger) with MGA protein (via PXLXP motif). Interacts (via MYND-type zinc finger) with EZH2. Interacts with EMSY and E2F6. Interacts with PIAS1 and UBE2I. Ubiquitinated, leading to proteasomal degradation. Post-translationally, sumoylated following its interaction with PIAS1 and UBE2I.

It is found in the nucleus. Its subcellular location is the chromosome. Functionally, chromatin reader that specifically recognizes and binds histone H3.3 trimethylated at 'Lys-36' (H3.3K36me3) and regulates RNA polymerase II elongation. Does not bind other histone H3 subtypes (H3.1 or H3.2). Colocalizes with highly expressed genes and functions as a transcription corepressor by modulating RNA polymerase II at the elongation stage. Binds non-specifically to dsDNA. Acts as a tumor-suppressor by repressing a transcriptional program essential for tumor cell growth. This Mus musculus (Mouse) protein is Zinc finger MYND domain-containing protein 11 (Zmynd11).